The chain runs to 384 residues: 8-amino-7-oxononanoate synthase (384 aa).

A substrate-binding site is contributed by arginine 21. Residue 108–109 (GF) participates in pyridoxal 5'-phosphate binding. Histidine 133 provides a ligand contact to substrate. Residues serine 179, histidine 207, and threonine 233 each coordinate pyridoxal 5'-phosphate. Lysine 236 carries the N6-(pyridoxal phosphate)lysine modification. Threonine 352 is a binding site for substrate.

This sequence belongs to the class-II pyridoxal-phosphate-dependent aminotransferase family. BioF subfamily. As to quaternary structure, homodimer. Pyridoxal 5'-phosphate serves as cofactor.

The catalysed reaction is 6-carboxyhexanoyl-[ACP] + L-alanine + H(+) = (8S)-8-amino-7-oxononanoate + holo-[ACP] + CO2. It participates in cofactor biosynthesis; biotin biosynthesis. In terms of biological role, catalyzes the decarboxylative condensation of pimeloyl-[acyl-carrier protein] and L-alanine to produce 8-amino-7-oxononanoate (AON), [acyl-carrier protein], and carbon dioxide. The polypeptide is 8-amino-7-oxononanoate synthase (Escherichia coli O17:K52:H18 (strain UMN026 / ExPEC)).